The sequence spans 387 residues: Acetylornithine aminotransferase (387 aa).

Pyridoxal 5'-phosphate is bound by residues 97–98 and phenylalanine 130; that span reads GT. Residue arginine 133 participates in N(2)-acetyl-L-ornithine binding. Position 215–218 (215–218) interacts with pyridoxal 5'-phosphate; the sequence is DEVQ. Residue lysine 244 is modified to N6-(pyridoxal phosphate)lysine. Residue threonine 273 coordinates pyridoxal 5'-phosphate.

This sequence belongs to the class-III pyridoxal-phosphate-dependent aminotransferase family. ArgD subfamily. Homodimer. Pyridoxal 5'-phosphate is required as a cofactor.

The protein localises to the cytoplasm. It catalyses the reaction N(2)-acetyl-L-ornithine + 2-oxoglutarate = N-acetyl-L-glutamate 5-semialdehyde + L-glutamate. Its pathway is amino-acid biosynthesis; L-arginine biosynthesis; N(2)-acetyl-L-ornithine from L-glutamate: step 4/4. This Clostridium acetobutylicum (strain ATCC 824 / DSM 792 / JCM 1419 / IAM 19013 / LMG 5710 / NBRC 13948 / NRRL B-527 / VKM B-1787 / 2291 / W) protein is Acetylornithine aminotransferase.